We begin with the raw amino-acid sequence, 226 residues long: uncharacterized protein (226 aa).

The protein belongs to the SSM1 family.

This is an uncharacterized protein from Schizosaccharomyces pombe (strain 972 / ATCC 24843) (Fission yeast).